The following is a 342-amino-acid chain: MKIVFFGTPEFAVPTLEKLLINPEFDVLAVITQPDKRRERGNKLTPSPVKNVAMSYSQWENIAHDLPVWQPERIKKDTETLNRLKELDVDAFVVVAYGQILPQKILNIPKLGSVNVHGSILPQYRGAAPIQWCLYNGETETGITTMLMDVGMDTGAMLLKATTPIGLLDNADDVAQKLSVIGGDLLIETLHKLQQKEIQPIPQDNAAATYASLIQKQDYGLDWSRSALQLHNQIRGFYPNCITTFRNQPLKITASFPLGAAYREELPPELQKMLQKLPDLSQISGSPGEVVSITKGVGAIAQTGEGLLLLREVQLPGKRPQSGWDFVNGTRLTVGEVLGNGS.

119–122 serves as a coordination point for (6S)-5,6,7,8-tetrahydrofolate; the sequence is SILP.

The protein belongs to the Fmt family.

The enzyme catalyses L-methionyl-tRNA(fMet) + (6R)-10-formyltetrahydrofolate = N-formyl-L-methionyl-tRNA(fMet) + (6S)-5,6,7,8-tetrahydrofolate + H(+). In terms of biological role, attaches a formyl group to the free amino group of methionyl-tRNA(fMet). The formyl group appears to play a dual role in the initiator identity of N-formylmethionyl-tRNA by promoting its recognition by IF2 and preventing the misappropriation of this tRNA by the elongation apparatus. This Nostoc sp. (strain PCC 7120 / SAG 25.82 / UTEX 2576) protein is Methionyl-tRNA formyltransferase.